The following is a 282-amino-acid chain: MEMO1 family protein Cmaq_1590 (282 aa).

This sequence belongs to the MEMO1 family.

The chain is MEMO1 family protein Cmaq_1590 from Caldivirga maquilingensis (strain ATCC 700844 / DSM 13496 / JCM 10307 / IC-167).